A 439-amino-acid polypeptide reads, in one-letter code: MTTYFDKIEKISFEGEKSTNPFAFKHYDANQVILGKTMAEHLRLAVCYWHTFCWNGNDMFGLGSLERSWQKNSNLLAGAEQKADIAFEFLNKLGVPYYCFHDVDIAPEGNSVREYVQNFHHIVDILERKQVETGVKLLWGTANCFTNPRYMSGAATNPNPEVFAWAATQVFNAMNATQRLGGENYVLWGGREGYETLLNTDLKREREQIGRFMQMVVEHKHKIGFKGTLLIEPKPQEPTKHQYDYDVATVYGFLKQFGLEKEIKVNIEANHATLAGHTFQHEIATACALDIFGSIDANRGDPQLGWDTDQFPNSVEENTLVMYEILKHGGFTTGGFNFDAKIRRQSIDPYDLFYAHIGAIDVLALSLKRAAKMLQEETLQKIVNERYAGWNSELGQHILQGKTSLETLAQLVQQKDLAPKPVSGQQEYLENLVNQVIYS.

Residues histidine 101 and aspartate 104 contribute to the active site. Mg(2+) is bound by residues glutamate 232, glutamate 268, histidine 271, aspartate 296, aspartate 307, aspartate 309, and aspartate 339.

This sequence belongs to the xylose isomerase family. Homotetramer. Requires Mg(2+) as cofactor.

Its subcellular location is the cytoplasm. The enzyme catalyses alpha-D-xylose = alpha-D-xylulofuranose. This chain is Xylose isomerase, found in Haemophilus influenzae (strain PittEE).